A 338-amino-acid polypeptide reads, in one-letter code: UPF0284 protein PAE0372 (338 aa).

It belongs to the UPF0284 family.

This is UPF0284 protein PAE0372 from Pyrobaculum aerophilum (strain ATCC 51768 / DSM 7523 / JCM 9630 / CIP 104966 / NBRC 100827 / IM2).